Here is a 127-residue protein sequence, read N- to C-terminus: Large ribosomal subunit protein bL12 (127 aa).

It belongs to the bacterial ribosomal protein bL12 family. Homodimer. Part of the ribosomal stalk of the 50S ribosomal subunit. Forms a multimeric L10(L12)X complex, where L10 forms an elongated spine to which 2 to 4 L12 dimers bind in a sequential fashion. Binds GTP-bound translation factors.

Functionally, forms part of the ribosomal stalk which helps the ribosome interact with GTP-bound translation factors. Is thus essential for accurate translation. The polypeptide is Large ribosomal subunit protein bL12 (Phytoplasma mali (strain AT)).